Consider the following 1411-residue polypeptide: Protein RhsB (1411 aa).

A run of 28 repeats spans residues 330 to 352 (GKQVRSFTYDDKYRGRMVAHRHT), 353 to 374 (GRPEIRYRYDSDGRVTEQLNPA), 375 to 417 (GLSY…EHAD), 418 to 438 (GSVTQSQFDAVGRLRAQTDAA), 439 to 460 (GRTTEYSPDVVTGLITRITTPD), 461 to 481 (GRASAFYYNHHNQLTSATGPD), 482 to 502 (GLELRREYDELGRLIQETAPD), 503 to 525 (GDITRYRYDNPHSDLPCATEDAT), 526 to 546 (GSRKTMTWSRYGQLLSFTDCS), 547 to 567 (GYVTRYDHDRFGQMTAVHREE), 568 to 588 (GLSQYRAYDSRGQLIAVKDTQ), 589 to 609 (GHETRYEYNIAGDLTAVIAPD), 610 to 629 (GSRNGTQYDAWGKAVRTTQG), 630 to 650 (GLTRSMEYDAAGRVIRLTSEN), 651 to 671 (GSHTTFRYDVLDRLIQETGFD), 672 to 691 (GRTQRYHHDLTGKLIRSEDE), 692 to 711 (GLVTHWHYDEADRLTHRTVK), 712 to 734 (GETAERWQYDERGWLTDISHISE), 735 to 758 (GHRVAVHYRYDEKGRLTGERQTVH), 808 to 828 (GDTPLVEYTRDRLHRETLRSF), 829 to 850 (GRYELTTAYTPAGQLQSQHLNS), 851 to 871 (LLSDRDYTWNDNGELIRISSP), 872 to 894 (RQTRSYSYSTTGRLTGVHTTAAN), 895 to 930 (LDIRIPYATDPAGNRLPDPELHPDSTLSMWPDNRIA), 931 to 959 (RDAHYLYRYDRHGRLTEKTDLIPEGVIRT), 960 to 984 (DDERTHRYHYDSQHRLVHYTRTQYE), 985 to 1019 (EPLVESRYLYDPLGRRVAKRVWRRERDLTGWMSLS), and 1162 to 1186 (GATAWCAEYDEWGNLLNEENPHQLQ). Residues 330 to 1186 (GKQVRSFTYD…LNEENPHQLQ (857 aa)) are 28 X approximate tandem repeats.

The protein belongs to the RHS family.

Functionally, rhs elements have a nonessential function. They may play an important role in the natural ecology of the cell. The protein is Protein RhsB (rhsB) of Escherichia coli (strain K12).